Reading from the N-terminus, the 281-residue chain is Protein DOG1-like 1 (281 aa).

Residues 9-265 form the DOG1 domain; sequence EKLQQDCYNE…HEWGKSREHR (257 aa). The tract at residues 262-281 is disordered; the sequence is REHRRLEASGGDSGGNVTRE.

This Arabidopsis thaliana (Mouse-ear cress) protein is Protein DOG1-like 1.